The chain runs to 447 residues: uncharacterized protein (447 aa).

Residues 39-76 (PQAAPYTRNNGMGECRRGHRQGHRAEVHDNRPADKVGQ) form a disordered region. Over residues 61-72 (HRAEVHDNRPAD) the composition is skewed to basic and acidic residues.

This sequence belongs to the 3-oxoacid CoA-transferase subunit A family.

This is an uncharacterized protein from Archaeoglobus fulgidus (strain ATCC 49558 / DSM 4304 / JCM 9628 / NBRC 100126 / VC-16).